The primary structure comprises 116 residues: Protein Wnt-5a (116 aa).

The O-palmitoleoyl serine; by PORCN moiety is linked to residue Ser-1. N-linked (GlcNAc...) asparagine glycosylation is found at Asn-69 and Asn-83. Cysteines 82 and 97 form a disulfide.

The protein belongs to the Wnt family. Post-translationally, palmitoleoylation is required for efficient binding to frizzled receptors. Depalmitoleoylation leads to Wnt signaling pathway inhibition.

The protein localises to the secreted. The protein resides in the extracellular space. It localises to the extracellular matrix. Ligand for members of the frizzled family of seven transmembrane receptors. Can activate or inhibit canonical Wnt signaling, depending on receptor context. Required during embryogenesis for extension of the primary anterior-posterior axis. The protein is Protein Wnt-5a (WNT5A) of Meleagris gallopavo (Wild turkey).